The following is a 202-amino-acid chain: Recoverin (202 aa).

A lipid anchor (N-myristoyl glycine) is attached at G2. Position 39 is a cysteine sulfenic acid (-SOH) (C39). 4 consecutive EF-hand domains span residues 41 to 59, 61 to 96, 97 to 132, and 147 to 182; these read SGRITKQEFQSIYSKFFPE, DPKAYAQHVFRSFDANSDGTLDFKEYVIALHMTSAG, KTNQKLEWAFSLYDVDGNGAISKSEVLEIVMAIFKM, and TPEKRAEKIWGFFGKKDDDKLTEEEFIEGTLANKEI. Positions 74, 76, 78, 80, 85, 110, 112, 114, and 121 each coordinate Ca(2+). The tract at residues 189–192 is interaction with GRK1; it reads EPRK.

The protein belongs to the recoverin family. Homodimer; disulfide-linked. Homodimerization is caused by prolonged intense illumination. May form a complex composed of RHO, GRK1 and RCVRN in a Ca(2+)-dependent manner; RCVRN prevents the interaction between GRK1 and RHO. Interacts (via C-terminus) with GRK1 (via N-terminus); the interaction is Ca(2+)-dependent. In terms of processing, the N-terminal glycine is linked to one of four different types of acyl groups. The most abundant is myristoleate (14:1), but 14:0, 14:2, and 12:0 acyl residues are also present. The Ca(2+) induced exposure of the myristoyl group, known as the calcium-myristoyl switch, promotes RCVRN binding to the photoreceptor cell membranes only when intracellular Ca(2+) concentration is high. Oxidation on Cys-39 occurs in response to prolonged intense illumination and results in the formation of disulfide homodimers, and to a lesser extent disulfide-linked heterodimers.

Its subcellular location is the photoreceptor inner segment. The protein resides in the cell projection. The protein localises to the cilium. It is found in the photoreceptor outer segment. It localises to the photoreceptor outer segment membrane. Its subcellular location is the perikaryon. In terms of biological role, acts as a calcium sensor and regulates phototransduction of cone and rod photoreceptor cells. Modulates light sensitivity of cone photoreceptor in dark and dim conditions. In response to high Ca(2+) levels induced by low light levels, prolongs RHO/rhodopsin activation in rod photoreceptor cells by binding to and inhibiting GRK1-mediated phosphorylation of RHO/rhodopsin. Plays a role in scotopic vision/enhances vision in dim light by enhancing signal transfer between rod photoreceptors and rod bipolar cells. Improves rod photoreceptor sensitivity in dim light and mediates response of rod photoreceptors to facilitate detection of change and motion in bright light. The sequence is that of Recoverin (RCVRN) from Canis lupus familiaris (Dog).